Here is a 138-residue protein sequence, read N- to C-terminus: Putative nickel-responsive regulator (138 aa).

Ni(2+) is bound by residues His78, His89, His91, and Cys97.

This sequence belongs to the transcriptional regulatory CopG/NikR family. Requires Ni(2+) as cofactor.

In terms of biological role, transcriptional regulator. This chain is Putative nickel-responsive regulator, found in Thermococcus kodakarensis (strain ATCC BAA-918 / JCM 12380 / KOD1) (Pyrococcus kodakaraensis (strain KOD1)).